The chain runs to 369 residues: tRNA pseudouridine synthase D (369 aa).

Catalysis depends on D80, which acts as the Nucleophile. The TRUD domain maps to G156–L318.

This sequence belongs to the pseudouridine synthase TruD family.

The enzyme catalyses uridine(13) in tRNA = pseudouridine(13) in tRNA. In terms of biological role, responsible for synthesis of pseudouridine from uracil-13 in transfer RNAs. This Xanthomonas oryzae pv. oryzae (strain KACC10331 / KXO85) protein is tRNA pseudouridine synthase D.